The primary structure comprises 205 residues: Probable GTP-binding protein EngB (205 aa).

In terms of domain architecture, EngB-type G spans 29 to 203 (QGAEIAFIGR…KAVLSQWFRS (175 aa)). Residues 37 to 44 (GRSNAGKS), 64 to 68 (GRTQM), 82 to 85 (DLPG), 149 to 152 (TKSD), and 182 to 184 (FSS) contribute to the GTP site. Residues S44 and T66 each contribute to the Mg(2+) site.

This sequence belongs to the TRAFAC class TrmE-Era-EngA-EngB-Septin-like GTPase superfamily. EngB GTPase family. It depends on Mg(2+) as a cofactor.

Necessary for normal cell division and for the maintenance of normal septation. This is Probable GTP-binding protein EngB from Coxiella burnetii (strain CbuG_Q212) (Coxiella burnetii (strain Q212)).